Consider the following 272-residue polypeptide: Glycosylphosphatidylinositol anchor biosynthesis protein 11 (272 aa).

Residues Gln21–Gly31 are compositionally biased toward polar residues. Residues Gln21 to Leu48 form a disordered region. Positions Ser32 to Leu48 are enriched in low complexity. The next 5 membrane-spanning stretches (helical) occupy residues Val91–Leu111, Leu145–Phe165, Phe177–Val197, Thr215–Leu235, and Ile248–Trp268.

The protein belongs to the PIGF family.

The protein resides in the endoplasmic reticulum membrane. It participates in glycolipid biosynthesis; glycosylphosphatidylinositol-anchor biosynthesis. Its function is as follows. Acts in the GPI biosynthetic pathway between GlcNAc-PI synthesis and GPI transfer to protein. The protein is Glycosylphosphatidylinositol anchor biosynthesis protein 11 (gpi-11) of Neurospora crassa (strain ATCC 24698 / 74-OR23-1A / CBS 708.71 / DSM 1257 / FGSC 987).